A 225-amino-acid chain; its full sequence is Respiratory nitrate reductase 1 gamma chain (225 aa).

The residue at position 1 (Met1) is an N-formylmethionine. Topologically, residues Met1–Phe3 are periplasmic. The chain crosses the membrane as a helical span at residues Leu4 to Asp29. At Tyr30–Gly47 the chain is on the cytoplasmic side. A helical transmembrane segment spans residues Met48 to Met70. Heme b-binding residues include His56 and His66. The Periplasmic segment spans residues Leu71 to Pro82. The chain crosses the membrane as a helical span at residues Ile83–Arg112. At Leu113 to Gly124 the chain is on the cytoplasmic side. The helical transmembrane segment at Ala125–Ala148 threads the bilayer. The Periplasmic portion of the chain corresponds to Gln149–Phe182. A helical transmembrane segment spans residues Ile183–Phe198. Residues His187 and His205 each contribute to the heme b site. At Pro199–His225 the chain is on the cytoplasmic side.

In terms of assembly, dimer of heterotrimers each composed of an alpha, a beta and a gamma chain. Alpha and beta are catalytic chains; gamma chains are involved in binding the enzyme complex to the cytoplasmic membrane. Heme serves as cofactor.

It localises to the cell inner membrane. It carries out the reaction nitrate + a quinol = a quinone + nitrite + H2O. The nitrate reductase enzyme complex allows E.coli to use nitrate as an electron acceptor during anaerobic growth. The gamma chain is a membrane-embedded heme-iron unit resembling cytochrome b, which transfers electrons from quinones to the beta subunit. In Escherichia coli (strain K12), this protein is Respiratory nitrate reductase 1 gamma chain (narI).